The sequence spans 32 residues: Photosystem II reaction center protein T (32 aa).

The chain crosses the membrane as a helical span at residues 3–23 (ALVYVFLLIGTLMIIFFAIFF).

It belongs to the PsbT family. In terms of assembly, PSII is composed of 1 copy each of membrane proteins PsbA, PsbB, PsbC, PsbD, PsbE, PsbF, PsbH, PsbI, PsbJ, PsbK, PsbL, PsbM, PsbT, PsbY, PsbZ, Psb30/Ycf12, at least 3 peripheral proteins of the oxygen-evolving complex and a large number of cofactors. It forms dimeric complexes.

Its subcellular location is the plastid. It localises to the chloroplast thylakoid membrane. Its function is as follows. Found at the monomer-monomer interface of the photosystem II (PS II) dimer, plays a role in assembly and dimerization of PSII. PSII is a light-driven water plastoquinone oxidoreductase, using light energy to abstract electrons from H(2)O, generating a proton gradient subsequently used for ATP formation. This chain is Photosystem II reaction center protein T, found in Cyanidioschyzon merolae (strain NIES-3377 / 10D) (Unicellular red alga).